Reading from the N-terminus, the 298-residue chain is Thymidylate synthase (298 aa).

Residues Arg25 and 159-160 each bind dUMP; that span reads RR. Cys179 acts as the Nucleophile in catalysis. DUMP-binding positions include 200 to 203, Asn211, and 241 to 243; these read RSVD and HLY. Asp203 is a binding site for (6R)-5,10-methylene-5,6,7,8-tetrahydrofolate. (6R)-5,10-methylene-5,6,7,8-tetrahydrofolate is bound at residue Ala297.

This sequence belongs to the thymidylate synthase family. Bacterial-type ThyA subfamily. In terms of assembly, homodimer.

The protein resides in the cytoplasm. The catalysed reaction is dUMP + (6R)-5,10-methylene-5,6,7,8-tetrahydrofolate = 7,8-dihydrofolate + dTMP. It functions in the pathway pyrimidine metabolism; dTTP biosynthesis. Catalyzes the reductive methylation of 2'-deoxyuridine-5'-monophosphate (dUMP) to 2'-deoxythymidine-5'-monophosphate (dTMP) while utilizing 5,10-methylenetetrahydrofolate (mTHF) as the methyl donor and reductant in the reaction, yielding dihydrofolate (DHF) as a by-product. This enzymatic reaction provides an intracellular de novo source of dTMP, an essential precursor for DNA biosynthesis. This Cereibacter sphaeroides (strain ATCC 17023 / DSM 158 / JCM 6121 / CCUG 31486 / LMG 2827 / NBRC 12203 / NCIMB 8253 / ATH 2.4.1.) (Rhodobacter sphaeroides) protein is Thymidylate synthase.